A 430-amino-acid chain; its full sequence is Putative aspergillopepsin A-like aspartic endopeptidase MCYG_07979 (430 aa).

The N-terminal stretch at 1 to 17 (MHLSSLLVAVLLPLALS) is a signal peptide. A propeptide spans 18–87 (KPTPRKKPGS…SKIAGGAPGA (70 aa)) (activation peptide). The interval 59–105 (STQGMDGYRPEPISRFQGNSKIAGGAPGAKDDGKDEKGEVENNPTSH) is disordered. Basic and acidic residues predominate over residues 87-98 (AKDDGKDEKGEV). A Peptidase A1 domain is found at 109 to 427 (FLSPVTIGGQ…DYRGPSVSLA (319 aa)). The active site involves Asp-125. Residue Asn-306 is glycosylated (N-linked (GlcNAc...) asparagine). Residue Asp-314 is part of the active site. A glycan (N-linked (GlcNAc...) asparagine) is linked at Asn-352.

This sequence belongs to the peptidase A1 family.

The protein localises to the secreted. This chain is Putative aspergillopepsin A-like aspartic endopeptidase MCYG_07979, found in Arthroderma otae (strain ATCC MYA-4605 / CBS 113480) (Microsporum canis).